Consider the following 186-residue polypeptide: Astacin-like metalloprotease toxin 5 (186 aa).

Residues 1 to 186 enclose the Peptidase M12A domain; sequence NAVKYDQQLW…CHSKRKAELL (186 aa). Intrachain disulfides connect Cys-42–Cys-177 and Cys-63–Cys-84. His-92 provides a ligand contact to Zn(2+). The active site involves Glu-93. The Zn(2+) site is built by His-96 and His-102. Residue Asn-122 is glycosylated (N-linked (GlcNAc...) asparagine).

Monomer. Requires Zn(2+) as cofactor. Expressed by the venom gland.

The protein resides in the secreted. Its activity is regulated as follows. Inhibited by 1,10-phenanthroline. Its function is as follows. Zinc metalloprotease. Provoques deadhesion of endothelial cells from cell cultures, and also degradation of fibronectin, fibrinogen and gelatin in vitro. Its role in the venom is not fully understood but it might act as a spreading factor that facilitates diffusion of other venom toxins. Alternatively, it might be involved in the proteolytic processing of other venom toxins or it might play a role in extra-oral digestion of prey. The sequence is that of Astacin-like metalloprotease toxin 5 from Loxosceles gaucho (Spider).